The following is a 229-amino-acid chain: Cytosolic-abundant heat soluble protein 107838 (229 aa).

The segment at 1 to 29 is disordered; the sequence is MSAEAMNMNMNQDAVFIPPPEGEQYERKE. The stretch at 109 to 145 forms a coiled coil; sequence LSANYQKEVERKTEAYRKQQEVEADKIRKELEKQHLR. 2 CAHS motif regions span residues 124 to 142 and 161 to 179; these read YRKQ…LEKQ and QKKM…MDRE. The span at 202–218 shows a compositional bias: polar residues; it reads SSAAGTETGGQVVSESQ. A disordered region spans residues 202–229; it reads SSAAGTETGGQVVSESQKFTERNRQIKQ. The segment covering 219–229 has biased composition (basic and acidic residues); the sequence is KFTERNRQIKQ.

This sequence belongs to the Cytosolic-abundant heat soluble protein (CAHS) family.

The protein localises to the cytoplasm. In terms of biological role, CAHS proteins are cytosolic heat soluble proteins that seem to contribute to the anhydrobiosis in tardigrades, but their specific mechanisms are yet to be identified. It is possible that protection during anhydrobiosis might occur via the stabilization of vitrifying small molecules such as sugars, but not via the direct glass transition of CAHS proteins themselves. The sequence is that of Cytosolic-abundant heat soluble protein 107838 from Paramacrobiotus richtersi (Water bear).